The primary structure comprises 322 residues: PI-PLC X domain-containing protein 3 (322 aa).

Residues Thr-22–Asn-197 form the PI-PLC X-box domain. Catalysis depends on residues His-37 and His-114.

The sequence is that of PI-PLC X domain-containing protein 3 (plcxd3) from Danio rerio (Zebrafish).